A 625-amino-acid chain; its full sequence is Phosphomethylpyrimidine synthase (625 aa).

Substrate contacts are provided by residues Asn-230, Met-259, Tyr-288, His-324, 344–346, 385–388, and Glu-424; these read SRG and DGLR. Zn(2+) is bound at residue His-428. Tyr-451 provides a ligand contact to substrate. Zn(2+) is bound at residue His-492. Positions 572, 575, and 580 each coordinate [4Fe-4S] cluster.

The protein belongs to the ThiC family. In terms of assembly, homodimer. Requires [4Fe-4S] cluster as cofactor.

It catalyses the reaction 5-amino-1-(5-phospho-beta-D-ribosyl)imidazole + S-adenosyl-L-methionine = 4-amino-2-methyl-5-(phosphooxymethyl)pyrimidine + CO + 5'-deoxyadenosine + formate + L-methionine + 3 H(+). It functions in the pathway cofactor biosynthesis; thiamine diphosphate biosynthesis. Its function is as follows. Catalyzes the synthesis of the hydroxymethylpyrimidine phosphate (HMP-P) moiety of thiamine from aminoimidazole ribotide (AIR) in a radical S-adenosyl-L-methionine (SAM)-dependent reaction. This chain is Phosphomethylpyrimidine synthase, found in Xanthomonas oryzae pv. oryzae (strain MAFF 311018).